The chain runs to 378 residues: MANGNSFGVLFCVTTYGESHGGAVGVVVDGCPPRLPLSEADIQAELDRRRPGQSPITTPRQEADRCQILSGVFQGFTLGTPIHILVRNQDARPQDYQEMATTFRPSHADATYQAKYGIRNWQGGGRASARETIGRVAAGAIAKKILRLAAGVEILAYVQRVKDVEAQVDPSSVTAEQVEANIVRCPDPQAAAAMIQKIEEAAREGDSLGGVVECVARRVPRGLGSPVFDKLEADLAKAVMSLPASKGFEIGSGFAGTYLTGKQHNDEFYMTPGGWRTRSNRSGGIQGGISNGEDIVLRVAFKPTATIRQPQNTVTLNGQETVLAARGRHDPCVLPRAVPMVEAMVALVLCDHLLRHHAQCGSLVLSEVPLPVAAAPQA.

Positions 42–61 (IQAELDRRRPGQSPITTPRQ) are disordered. Position 49 (Arg49) interacts with NADP(+). FMN is bound by residues 126–128 (RAS), Gly287, 302–306 (KPTAT), and Arg328.

It belongs to the chorismate synthase family. In terms of assembly, homotetramer. FMNH2 is required as a cofactor.

It catalyses the reaction 5-O-(1-carboxyvinyl)-3-phosphoshikimate = chorismate + phosphate. Its pathway is metabolic intermediate biosynthesis; chorismate biosynthesis; chorismate from D-erythrose 4-phosphate and phosphoenolpyruvate: step 7/7. Catalyzes the anti-1,4-elimination of the C-3 phosphate and the C-6 proR hydrogen from 5-enolpyruvylshikimate-3-phosphate (EPSP) to yield chorismate, which is the branch point compound that serves as the starting substrate for the three terminal pathways of aromatic amino acid biosynthesis. This reaction introduces a second double bond into the aromatic ring system. The sequence is that of Chorismate synthase from Synechococcus sp. (strain JA-2-3B'a(2-13)) (Cyanobacteria bacterium Yellowstone B-Prime).